The following is a 960-amino-acid chain: MWRAGRAALACEVCQSLVKHSSGVQRNVPLQKLHLVSRSIYRSHHPALKLQRPQLRTSFQQFSSLTNLSLHKLKLSPTKYGYQPRRNFWPARLAARLLKLRYIILGSAVGGGYTAKKTFDEWKDMIPDLSDYKWIVPDFIWEIDEYIDLEKIRKALPSSEDLANFAPDLDKIAESLSLLKDFFTAGTPGETAFRATDHGSESDKHYRKVSDKEKIDQLQEELLHTQLKYQRILERLEKENKELRKLVLQKDDKGIHHRKLKKSLIDMYSEVLDVLSDYDASYNTQDHLPRVVVVGDQSAGKTSVLEMIAQARIFPRGSGEMMTRSPVKVTLSEGPHHVALFKDSSREFDLTKEEDLAALRHEIELRMRKNVKEGCTVSPETISLNVKGPGLQRMVLVDLPGVINTVTSGMAPDTKETIFSISKAYMQNPNAIILCIQDGSVDAERSIVTDLVSQMDPHGRRTIFVLTKVDLAEKNVASPSRIQQIIEGKLFPMKALGYFAVVTGKGNSSESIEAIREYEEEFFQNSKLLKTSMLKAHQVTTRNLSLAVSDCFWKMVRESVEQQADSFKATRFNLETEWKNNYPRLRELDRNELFEKAKNEILDEVISLSQVTPKHWEEILQQSLWERVSTHVIENIYLPAAQTMNSGTFNTTVDIKLKQWTDKQLPNKAVEVAWETLQDEFSRFMTEPKGKEHDDIFDKLKEAVKEESIKRHKWNDFAEDSLRVIQHNALEDRSISDKQQWDAAIYFMEEALQGRLKDTENAIENMIGPDWKKRWIYWKNRTQEQCVHNETKNELEKMLKVNDEHPAYLASDEITTVRKNLESRGVEVDPSLIKDTWHQVYRRHFLKTALNHCNLCRRGFYYYQRHFIDSELECNDVVLFWRIQRMLAITANTLRQQLTNTEVRRLEKNVKEVLEDFAEDGEKKVKLLTGKRVQLAEDLKKVREIQEKLDAFIEALHQEK.

Residues 1–87 (MWRAGRAALA…TKYGYQPRRN (87 aa)) constitute a mitochondrion transit peptide. At 88–96 (FWPARLAAR) the chain is on the mitochondrial matrix side. The helical transmembrane segment at 97–113 (LLKLRYIILGSAVGGGY) threads the bilayer. At 114–770 (TAKKTFDEWK…NAIENMIGPD (657 aa)) the chain is on the mitochondrial intermembrane side. The stretch at 210–254 (SDKEKIDQLQEELLHTQLKYQRILERLEKENKELRKLVLQKDDKG) forms a coiled coil. Positions 217-222 (QLQEEL) match the LQQQIQ motif motif. Position 228 is an N6-acetyllysine (lysine 228). Positions 234–239 (ERLEKE) match the LQQQIQ motif motif. The Dynamin-type G domain maps to 285 to 561 (QDHLPRVVVV…FWKMVRESVE (277 aa)). Residues 295–302 (GDQSAGKT) form a G1 motif region. Positions 298, 300, 301, 302, 303, and 317 each coordinate GTP. A Mg(2+)-binding site is contributed by threonine 302. The segment at 321-324 (MMTR) is G2 motif. Residues threonine 323 and aspartate 398 each coordinate Mg(2+). Residues 398–401 (DLPG) form a G3 motif region. The segment at 467–470 (TKVD) is G4 motif. GTP-binding residues include lysine 468, aspartate 470, and threonine 503. A G5 motif region spans residues 501–504 (VVTG). Stalk region stretches follow at residues 589–836 (DRNE…IKDT) and 874–928 (CNDV…VKLL). The paddle region stretch occupies residues 736-856 (SDKQQWDAAI…KTALNHCNLC (121 aa)). An intramembrane segment occupies 771–781 (WKKRWIYWKNR). Topologically, residues 782–960 (TQEQCVHNET…AFIEALHQEK (179 aa)) are mitochondrial intermembrane. An intrachain disulfide couples cysteine 856 to cysteine 874. Positions 895–960 (RQQLTNTEVR…AFIEALHQEK (66 aa)) form a coiled coil.

Belongs to the TRAFAC class dynamin-like GTPase superfamily. Dynamin/Fzo/YdjA family. Oligomeric complex consisting of membrane-bound and soluble forms of OPA1. Interacts with RCC1L; RCC1L acts as a guanine nucleotide exchange factor (GEF) for OPA1 by exchanging bound GDP for free GTP. Interacts with CHCHD3 and IMMT; these interactions occur preferentially with soluble OPA1 forms. Interacts with PRELID1. Post-translationally, cleaved by OMA1 or YME1L downstream of the transmembrane region in response to different signals to generate soluble forms. Cleaved by OMA1 at position S1 following stress conditions, generating the short soluble form (Dynamin-like GTPase OPA1, short form; S-OPA1). AFG3L2 is involved in the regulation of OMA1-dependent processing of OPA1. PARL-dependent proteolytic processing releases an antiapoptotic soluble form not required for mitochondrial fusion. Cleavage at position S2 by YME1L is required to mediate oxidative phosphorylation (OXPHOS)-induced mitochondrial fusion. Cleavage occurs in the sequence motif Leu-Gln-Gln-Gln-Ile-Gln (LQQQIQ). Expressed in brain as well as retinal ganglion, starbust amacrine and horizontal cells of the retina. Absent from nerve fibers and photoreceptor cells of the retina.

The protein localises to the mitochondrion inner membrane. Its subcellular location is the mitochondrion intermembrane space. The catalysed reaction is GTP + H2O = GDP + phosphate + H(+). With respect to regulation, activated by guanine nucleotide exchange factor RCC1L. Functionally, dynamin-related GTPase that is essential for normal mitochondrial morphology by mediating fusion of the mitochondrial inner membranes, regulating cristae morphology and maintaining respiratory chain function. Exists in two forms: the transmembrane, long form (Dynamin-like GTPase OPA1, long form; L-OPA1), which is tethered to the inner mitochondrial membrane, and the short soluble form (Dynamin-like GTPase OPA1, short form; S-OPA1), which results from proteolytic cleavage and localizes in the intermembrane space. Both forms (L-OPA1 and S-OPA1) cooperate to catalyze the fusion of the mitochondrial inner membrane. The equilibrium between L-OPA1 and S-OPA1 is essential: excess levels of S-OPA1, produced by cleavage by OMA1 following loss of mitochondrial membrane potential, lead to an impaired equilibrium between L-OPA1 and S-OPA1, inhibiting mitochondrial fusion. The balance between L-OPA1 and S-OPA1 also influences cristae shape and morphology. Involved in remodeling cristae and the release of cytochrome c during apoptosis. Proteolytic processing by PARL in response to intrinsic apoptotic signals may lead to disassembly of OPA1 oligomers and release of the caspase activator cytochrome C (CYCS) into the mitochondrial intermembrane space. Acts as a regulator of T-helper Th17 cells, which are characterized by cells with fused mitochondria with tight cristae, by mediating mitochondrial membrane remodeling: OPA1 is required for interleukin-17 (IL-17) production. Its role in mitochondrial morphology is required for mitochondrial genome maintenance. Its function is as follows. Constitutes the transmembrane long form (L-OPA1) that plays a central role in mitochondrial inner membrane fusion and cristae morphology. L-OPA1 and the soluble short form (S-OPA1) form higher-order helical assemblies that coordinate the fusion of mitochondrial inner membranes. Inner membrane-anchored L-OPA1 molecules initiate membrane remodeling by recruiting soluble S-OPA1 to rapidly polymerize into a flexible cylindrical scaffold encaging the mitochondrial inner membrane. Once at the membrane surface, the formation of S-OPA1 helices induce bilayer curvature. OPA1 dimerization through the paddle region, which inserts into cardiolipin-containing membrane, promotes GTP hydrolysis and the helical assembly of a flexible OPA1 lattice on the membrane, which drives membrane curvature and mitochondrial fusion. Plays a role in the maintenance and remodeling of mitochondrial cristae, some invaginations of the mitochondrial inner membrane that provide an increase in the surface area. Probably acts by forming helical filaments at the inside of inner membrane tubes with the shape and dimensions of crista junctions. The equilibrium between L-OPA1 and S-OPA1 influences cristae shape and morphology: increased L-OPA1 levels promote cristae stacking and elongated mitochondria, while increased S-OPA1 levels correlated with irregular cristae packing and round mitochondria shape. In terms of biological role, constitutes the soluble short form (S-OPA1) generated by cleavage by OMA1, which plays a central role in mitochondrial inner membrane fusion and cristae morphology. The transmembrane long form (L-OPA1) and the S-OPA1 form higher-order helical assemblies that coordinate the fusion of mitochondrial inner membranes. Inner membrane-anchored L-OPA1 molecules initiate membrane remodeling by recruiting soluble S-OPA1 to rapidly polymerize into a flexible cylindrical scaffold encaging the mitochondrial inner membrane. Once at the membrane surface, the formation of S-OPA1 helices induce bilayer curvature. OPA1 dimerization through the paddle region, which inserts into cardiolipin-containing membrane, promotes GTP hydrolysis and the helical assembly of a flexible OPA1 lattice on the membrane, which drives membrane curvature and mitochondrial fusion. Excess levels of S-OPA1 produced by cleavage by OMA1 following stress conditions that induce loss of mitochondrial membrane potential, lead to an impaired equilibrium between L-OPA1 and S-OPA1, thereby inhibiting mitochondrial fusion. Involved in mitochondrial safeguard in response to transient mitochondrial membrane depolarization by mediating flickering: cleavage by OMA1 leads to excess production of S-OPA1, preventing mitochondrial hyperfusion. Plays a role in the maintenance and remodeling of mitochondrial cristae, some invaginations of the mitochondrial inner membrane that provide an increase in the surface area. Probably acts by forming helical filaments at the inside of inner membrane tubes with the shape and dimensions of crista junctions. The equilibrium between L-OPA1 and S-OPA1 influences cristae shape and morphology: increased L-OPA1 levels promote cristae stacking and elongated mitochondria, while increased S-OPA1 levels correlated with irregular cristae packing and round mitochondria shape. Isoforms that contain the alternative exon 4b are required for mitochondrial genome maintenance, possibly by anchoring the mitochondrial nucleoids to the inner mitochondrial membrane. The sequence is that of Dynamin-like GTPase OPA1, mitochondrial from Rattus norvegicus (Rat).